The following is a 151-amino-acid chain: Lipoprotein signal peptidase (151 aa).

2 helical membrane-spanning segments follow: residues 61-81 (GSQW…IWIG) and 88-107 (SRWQ…GNGI). Residues aspartate 117 and aspartate 133 contribute to the active site. The helical transmembrane segment at 128-148 (VFNLADVAINLAVLCLLIEAI) threads the bilayer.

Belongs to the peptidase A8 family.

It is found in the cell inner membrane. It catalyses the reaction Release of signal peptides from bacterial membrane prolipoproteins. Hydrolyzes -Xaa-Yaa-Zaa-|-(S,diacylglyceryl)Cys-, in which Xaa is hydrophobic (preferably Leu), and Yaa (Ala or Ser) and Zaa (Gly or Ala) have small, neutral side chains.. It functions in the pathway protein modification; lipoprotein biosynthesis (signal peptide cleavage). In terms of biological role, this protein specifically catalyzes the removal of signal peptides from prolipoproteins. This chain is Lipoprotein signal peptidase, found in Synechococcus sp. (strain RCC307).